We begin with the raw amino-acid sequence, 374 residues long: Pyruvate dehydrogenase E1 component subunit beta-1, mitochondrial (374 aa).

A mitochondrion-targeting transit peptide spans 1–34; it reads MLGIARRRLGSGCALGQLMQALRPAAAAAAARTY. Thiamine diphosphate is bound at residue Glu97. K(+) contacts are provided by Ile150, Ala198, Ile199, and Asp201.

As to quaternary structure, tetramer of 2 alpha and 2 beta subunits. Thiamine diphosphate is required as a cofactor.

It localises to the mitochondrion matrix. The enzyme catalyses N(6)-[(R)-lipoyl]-L-lysyl-[protein] + pyruvate + H(+) = N(6)-[(R)-S(8)-acetyldihydrolipoyl]-L-lysyl-[protein] + CO2. The pyruvate dehydrogenase complex catalyzes the overall conversion of pyruvate to acetyl-CoA and CO(2). It contains multiple copies of three enzymatic components: pyruvate dehydrogenase (E1), dihydrolipoamide acetyltransferase (E2) and lipoamide dehydrogenase (E3). This is Pyruvate dehydrogenase E1 component subunit beta-1, mitochondrial from Oryza sativa subsp. japonica (Rice).